Reading from the N-terminus, the 160-residue chain is Cytochrome b6-f complex subunit 4 (160 aa).

Transmembrane regions (helical) follow at residues 36-56 (LLYI…GLAV), 95-115 (LLGV…PFLE), and 131-151 (TIFL…ALPI).

The protein belongs to the cytochrome b family. PetD subfamily. In terms of assembly, the 4 large subunits of the cytochrome b6-f complex are cytochrome b6, subunit IV (17 kDa polypeptide, petD), cytochrome f and the Rieske protein, while the 4 small subunits are petG, petL, petM and petN. The complex functions as a dimer.

The protein localises to the plastid. It localises to the chloroplast thylakoid membrane. In terms of biological role, component of the cytochrome b6-f complex, which mediates electron transfer between photosystem II (PSII) and photosystem I (PSI), cyclic electron flow around PSI, and state transitions. In Anthoceros angustus (Hornwort), this protein is Cytochrome b6-f complex subunit 4.